We begin with the raw amino-acid sequence, 325 residues long: Post-GPI attachment to proteins factor 2-like (325 aa).

The next 6 helical transmembrane spans lie at 80-100, 130-150, 171-191, 205-225, 243-263, and 276-296; these read VVTA…AYVF, YFWR…AFVY, LLIT…GGVT, IFIT…KLNG, WKKI…VFFA, and WFAF…FTII.

This sequence belongs to the PGAP2 family.

The protein resides in the membrane. This chain is Post-GPI attachment to proteins factor 2-like, found in Drosophila melanogaster (Fruit fly).